The following is a 523-amino-acid chain: Bifunctional purine biosynthesis protein PurH (523 aa).

The region spanning 1-152 (MSTDDGRRPI…KNHPSAAVVT (152 aa)) is the MGS-like domain.

It belongs to the PurH family.

It carries out the reaction (6R)-10-formyltetrahydrofolate + 5-amino-1-(5-phospho-beta-D-ribosyl)imidazole-4-carboxamide = 5-formamido-1-(5-phospho-D-ribosyl)imidazole-4-carboxamide + (6S)-5,6,7,8-tetrahydrofolate. It catalyses the reaction IMP + H2O = 5-formamido-1-(5-phospho-D-ribosyl)imidazole-4-carboxamide. It participates in purine metabolism; IMP biosynthesis via de novo pathway; 5-formamido-1-(5-phospho-D-ribosyl)imidazole-4-carboxamide from 5-amino-1-(5-phospho-D-ribosyl)imidazole-4-carboxamide (10-formyl THF route): step 1/1. It functions in the pathway purine metabolism; IMP biosynthesis via de novo pathway; IMP from 5-formamido-1-(5-phospho-D-ribosyl)imidazole-4-carboxamide: step 1/1. The chain is Bifunctional purine biosynthesis protein PurH from Mycobacterium bovis (strain BCG / Pasteur 1173P2).